The sequence spans 348 residues: Ion-translocating oxidoreductase complex subunit D (348 aa).

5 consecutive transmembrane segments (helical) span residues Leu15 to Ala35, Tyr36 to Ile56, Leu67 to Ser87, Ile88 to Ala108, and Val125 to Ile145. Thr186 carries the post-translational modification FMN phosphoryl threonine. 5 consecutive transmembrane segments (helical) span residues Leu212–Ile232, Ile241–Pro261, Leu265–Thr285, Leu298–Pro318, and Ala320–Gln340.

This sequence belongs to the NqrB/RnfD family. The complex is composed of six subunits: RnfA, RnfB, RnfC, RnfD, RnfE and RnfG. It depends on FMN as a cofactor.

It is found in the cell inner membrane. Functionally, part of a membrane-bound complex that couples electron transfer with translocation of ions across the membrane. The sequence is that of Ion-translocating oxidoreductase complex subunit D from Actinobacillus pleuropneumoniae serotype 7 (strain AP76).